A 348-amino-acid chain; its full sequence is Uroporphyrinogen decarboxylase (348 aa).

Residues 23-27 (RQAGR), D72, Y148, S203, and H316 each bind substrate.

The protein belongs to the uroporphyrinogen decarboxylase family. In terms of assembly, homodimer.

Its subcellular location is the cytoplasm. The enzyme catalyses uroporphyrinogen III + 4 H(+) = coproporphyrinogen III + 4 CO2. The protein operates within porphyrin-containing compound metabolism; protoporphyrin-IX biosynthesis; coproporphyrinogen-III from 5-aminolevulinate: step 4/4. Catalyzes the decarboxylation of four acetate groups of uroporphyrinogen-III to yield coproporphyrinogen-III. This chain is Uroporphyrinogen decarboxylase, found in Myxococcus xanthus (strain DK1622).